A 146-amino-acid chain; its full sequence is Hemoglobin subunit beta (146 aa).

Residues 2–146 form the Globin domain; that stretch reads HWTAEEKQLI…VAHALARKYH (145 aa). Heme b is bound by residues histidine 63 and histidine 92.

The protein belongs to the globin family. Heterotetramer of two alpha chains and two beta chains. In terms of tissue distribution, red blood cells.

Its function is as follows. Involved in oxygen transport from the lung to the various peripheral tissues. This Chloephaga melanoptera (Andean goose) protein is Hemoglobin subunit beta (HBB).